Reading from the N-terminus, the 480-residue chain is Protein nucleotidyltransferase YdiU (480 aa).

Residues Gly86, Gly88, Arg89, Lys109, Asp121, Gly122, Arg172, and Arg179 each coordinate ATP. The Proton acceptor role is filled by Asp248. Mg(2+) contacts are provided by Asn249 and Asp258. Asp258 lines the ATP pocket.

The protein belongs to the SELO family. Mg(2+) is required as a cofactor. The cofactor is Mn(2+).

It carries out the reaction L-seryl-[protein] + ATP = 3-O-(5'-adenylyl)-L-seryl-[protein] + diphosphate. The enzyme catalyses L-threonyl-[protein] + ATP = 3-O-(5'-adenylyl)-L-threonyl-[protein] + diphosphate. It catalyses the reaction L-tyrosyl-[protein] + ATP = O-(5'-adenylyl)-L-tyrosyl-[protein] + diphosphate. The catalysed reaction is L-histidyl-[protein] + UTP = N(tele)-(5'-uridylyl)-L-histidyl-[protein] + diphosphate. It carries out the reaction L-seryl-[protein] + UTP = O-(5'-uridylyl)-L-seryl-[protein] + diphosphate. The enzyme catalyses L-tyrosyl-[protein] + UTP = O-(5'-uridylyl)-L-tyrosyl-[protein] + diphosphate. In terms of biological role, nucleotidyltransferase involved in the post-translational modification of proteins. It can catalyze the addition of adenosine monophosphate (AMP) or uridine monophosphate (UMP) to a protein, resulting in modifications known as AMPylation and UMPylation. The chain is Protein nucleotidyltransferase YdiU from Salmonella arizonae (strain ATCC BAA-731 / CDC346-86 / RSK2980).